We begin with the raw amino-acid sequence, 792 residues long: Kinesin-associated protein 3 (792 aa).

At Ser60 the chain carries Phosphoserine. Positions 103-119 (LSGKEKKEKSSKPKDPP) are enriched in basic and acidic residues. The interval 103–124 (LSGKEKKEKSSKPKDPPPFEGM) is disordered. ARM repeat units lie at residues 333–373 (FMEN…NLSF), 374–412 (DTGLRNKMVQVGLLPKLTALLGNDNYKQIAMCVLYHISM), 494–533 (DGPTKNLFIDYVGDLAAQISNDEEEEFVIECLGTLANLTI), 578–620 (DDSC…QMVF), and 621–662 (HQAT…IIAE).

In terms of assembly, heterotrimer of KIFAP3, KIF3A and KIF3B. Interacts with RAP1GDS1/SMG GDS. Interacts with SMC3 subunit of the cohesin complex. Post-translationally, phosphorylated on tyrosine residues by SRC in vitro; this reduces the binding affinity of the protein for RAP1GDS1.

Functionally, involved in tethering the chromosomes to the spindle pole and in chromosome movement. Binds to the tail domain of the KIF3A/KIF3B heterodimer to form a heterotrimeric KIF3 complex and may regulate the membrane binding of this complex. In Homo sapiens (Human), this protein is Kinesin-associated protein 3 (KIFAP3).